Reading from the N-terminus, the 461-residue chain is Fumarate hydratase class II (461 aa).

Substrate is bound by residues 97–99, 127–130, 137–139, and threonine 185; these read SGT, HPND, and SSN. Histidine 186 acts as the Proton donor/acceptor in catalysis. Residue serine 316 is part of the active site. Residues serine 317 and 322 to 324 contribute to the substrate site; that span reads KVN.

This sequence belongs to the class-II fumarase/aspartase family. Fumarase subfamily. In terms of assembly, homotetramer.

The protein localises to the cytoplasm. The catalysed reaction is (S)-malate = fumarate + H2O. The protein operates within carbohydrate metabolism; tricarboxylic acid cycle; (S)-malate from fumarate: step 1/1. Its function is as follows. Involved in the TCA cycle. Catalyzes the stereospecific interconversion of fumarate to L-malate. The protein is Fumarate hydratase class II of Staphylococcus saprophyticus subsp. saprophyticus (strain ATCC 15305 / DSM 20229 / NCIMB 8711 / NCTC 7292 / S-41).